The chain runs to 146 residues: Suppressor APC domain-containing protein 1 (146 aa).

Residues 121-146 (HRKGVTQSTGEVVSQAPPGPKGPTLV) form a disordered region. Pro residues predominate over residues 137-146 (PPGPKGPTLV).

The chain is Suppressor APC domain-containing protein 1 (Sapcd1) from Mus musculus (Mouse).